The primary structure comprises 569 residues: Endonuclease/exonuclease/phosphatase family domain-containing protein 1 (569 aa).

The N-myristoyl glycine moiety is linked to residue glycine 2. Residues serine 16 and serine 25 each carry the phosphoserine modification. Residues 38-67 (ERLNINTATEEELMTLPGVTRAVARSIVEY) enclose the HhH domain. Residues serine 106, serine 110, serine 160, and serine 173 each carry the phosphoserine modification. The segment at 200–224 (SRPPSTHTNGGLTFTAKPHPSPTSL) is disordered. Over residues 202–211 (PPSTHTNGGL) the composition is skewed to polar residues. Residue threonine 265 is modified to Phosphothreonine. A disordered region spans residues 549–569 (VPRNGNGVTLEPSEANIKHER).

This Mus musculus (Mouse) protein is Endonuclease/exonuclease/phosphatase family domain-containing protein 1 (Eepd1).